The following is a 477-amino-acid chain: Glutamyl-tRNA(Gln) amidotransferase subunit A (477 aa).

Active-site charge relay system residues include Lys76 and Ser151. The active-site Acyl-ester intermediate is Ser175.

The protein belongs to the amidase family. GatA subfamily. In terms of assembly, heterotrimer of A, B and C subunits.

The catalysed reaction is L-glutamyl-tRNA(Gln) + L-glutamine + ATP + H2O = L-glutaminyl-tRNA(Gln) + L-glutamate + ADP + phosphate + H(+). Allows the formation of correctly charged Gln-tRNA(Gln) through the transamidation of misacylated Glu-tRNA(Gln) in organisms which lack glutaminyl-tRNA synthetase. The reaction takes place in the presence of glutamine and ATP through an activated gamma-phospho-Glu-tRNA(Gln). In Prosthecochloris aestuarii (strain DSM 271 / SK 413), this protein is Glutamyl-tRNA(Gln) amidotransferase subunit A.